Consider the following 2028-residue polypeptide: Protein Daple (2028 aa).

Residues Leu-11 to Ala-131 enclose the Calponin-homology (CH) domain. Residues Ala-222–Gln-250 form a disordered region. 2 positions are modified to phosphoserine: Ser-227 and Ser-239. A compositionally biased stretch (low complexity) spans Ile-229–Ser-245. Coiled-coil stretches lie at residues Glu-247–Glu-428, Glu-456–Gly-1017, His-1045–Ile-1094, and Leu-1139–Lys-1393. Position 486 is a phosphoserine (Ser-486). Residues Arg-1011–Phe-1024 are compositionally biased toward polar residues. Residues Arg-1011–Pro-1043 form a disordered region. Residues Lys-1419–Ser-1428 show a composition bias toward basic and acidic residues. Disordered regions lie at residues Lys-1419–Met-1724 and Ala-1736–Arg-1803. Low complexity-rich tracts occupy residues Ser-1439 to Pro-1450, Ser-1517 to Pro-1534, and Ser-1568 to Leu-1588. A Phosphoserine modification is found at Ser-1444. The segment covering Lys-1589–Ser-1604 has biased composition (polar residues). Phosphoserine is present on Ser-1601. A GBA motif is present at residues Cys-1661–Cys-1691. A compositionally biased stretch (basic and acidic residues) spans Pro-1689–Ser-1704. Positions His-1792–Arg-1803 are enriched in low complexity. Ser-1806 bears the Phosphoserine mark. Residues Ser-1816–Val-2021 are disordered. The segment covering Ser-1842–Ser-1855 has biased composition (polar residues). The segment covering Arg-1879 to Ala-1897 has biased composition (basic and acidic residues). The segment covering Ser-1902–Ser-1924 has biased composition (low complexity). Thr-1954 carries the post-translational modification Phosphothreonine. The PDZ-binding motif lies at Tyr-2025–Val-2028. Positions Gly-2026–Val-2028 are DVL1-binding.

Belongs to the CCDC88 family. In terms of assembly, homooligomer. Interacts with DVL1 (via PDZ domain); dissociates following initiation of non-canonical Wnt signaling. Interacts (via C-terminus) with ligand-activated Wnt receptor FZD7; competes with DVL1 for binding to FZD7 and displaces DVL1 from ligand-activated FZD7. Interacts (via GBA motif) with guanine nucleotide-binding protein G(i) alpha subunits GNAI1, GNAI2 and GNAI3 (inactive GDP-bound form); interacts with higher affinity with GNAI1 and GNAI3 than with GNAI2 and interaction leads to G(i) alpha subunit activation. Does not interact with GNAO1.

The protein localises to the cytoplasm. The protein resides in the cell junction. Functionally, required for activation of guanine nucleotide-binding proteins (G-proteins) during non-canonical Wnt signaling. Binds to ligand-activated Wnt receptor FZD7, displacing DVL1 from the FZD7 receptor and leading to inhibition of canonical Wnt signaling. Acts as a non-receptor guanine nucleotide exchange factor by also binding to guanine nucleotide-binding protein G(i) alpha (Gi-alpha) subunits, leading to their activation. Binding to Gi-alpha subunits displaces the beta and gamma subunits from the heterotrimeric G-protein complex, triggering non-canonical Wnt responses such as activation of RAC1 and PI3K-AKT signaling. Promotes apical constriction of cells via ARHGEF18. The chain is Protein Daple (CCDC88C) from Homo sapiens (Human).